The sequence spans 331 residues: Ketol-acid reductoisomerase (NADP(+)) (331 aa).

One can recognise a KARI N-terminal Rossmann domain in the interval 2-182; that stretch reads AQLFYDSDAD…GGTRAGILET (181 aa). Residues 25 to 28, Ser-51, Ser-53, and 83 to 86 each bind NADP(+); these read YGSQ and DEFQ. The active site involves His-108. Residue Gly-134 participates in NADP(+) binding. The region spanning 183–328 is the KARI C-terminal knotted domain; it reads NFKEETETDL…KGLRSMFSWL (146 aa). Mg(2+) contacts are provided by Asp-191, Glu-195, Glu-227, and Glu-231. Residue Ser-252 coordinates substrate.

It belongs to the ketol-acid reductoisomerase family. Mg(2+) serves as cofactor.

It carries out the reaction (2R)-2,3-dihydroxy-3-methylbutanoate + NADP(+) = (2S)-2-acetolactate + NADPH + H(+). The enzyme catalyses (2R,3R)-2,3-dihydroxy-3-methylpentanoate + NADP(+) = (S)-2-ethyl-2-hydroxy-3-oxobutanoate + NADPH + H(+). It participates in amino-acid biosynthesis; L-isoleucine biosynthesis; L-isoleucine from 2-oxobutanoate: step 2/4. The protein operates within amino-acid biosynthesis; L-valine biosynthesis; L-valine from pyruvate: step 2/4. Functionally, involved in the biosynthesis of branched-chain amino acids (BCAA). Catalyzes an alkyl-migration followed by a ketol-acid reduction of (S)-2-acetolactate (S2AL) to yield (R)-2,3-dihydroxy-isovalerate. In the isomerase reaction, S2AL is rearranged via a Mg-dependent methyl migration to produce 3-hydroxy-3-methyl-2-ketobutyrate (HMKB). In the reductase reaction, this 2-ketoacid undergoes a metal-dependent reduction by NADPH to yield (R)-2,3-dihydroxy-isovalerate. The protein is Ketol-acid reductoisomerase (NADP(+)) of Synechococcus sp. (strain CC9902).